Here is a 980-residue protein sequence, read N- to C-terminus: BEM1-interacting protein 1 (980 aa).

Residues 13–77 (KSFPLYIAVN…PAVFTKRIAI (65 aa)) enclose the SH3 domain. Residues serine 104, serine 106, and serine 128 each carry the phosphoserine modification. A disordered region spans residues 139–163 (SGSVEQEVSKSPTRVPEVSTPQLQD). Positions 141–150 (SVEQEVSKSP) are enriched in polar residues. Phosphothreonine occurs at positions 151 and 158. Residue serine 209 is modified to Phosphoserine. The region spanning 228 to 292 (WSPEEVTDYF…FKEIRNIKSA (65 aa)) is the SAM domain. 2 disordered regions span residues 333 to 356 (SKCN…ELQR) and 390 to 438 (IFES…KNKN). Phosphoserine is present on residues serine 393 and serine 412. Positions 397 to 412 (APKPPSYPSPVQPPQS) are enriched in pro residues. The segment covering 415–438 (FNNRYTNNNARFPPQTTYPPKNKN) has biased composition (polar residues). 2 positions are modified to phosphoserine: serine 525 and serine 528. Residues 544–762 (SSFDEEETKQ…AKKQQTSAFT (219 aa)) are disordered. A compositionally biased stretch (basic and acidic residues) spans 573–582 (HSRDASLSEM). 3 positions are modified to phosphoserine: serine 589, serine 590, and serine 593. 2 stretches are compositionally biased toward low complexity: residues 589–608 (SSIL…SPTK) and 621–638 (HSRS…QSYS). 2 positions are modified to phosphoserine: serine 644 and serine 655. Polar residues-rich tracts occupy residues 645 to 662 (LVTS…SKSN) and 669 to 683 (ETPT…VSQP). Residues 687–703 (KHKHKHKHKSKHKHKNS) are compositionally biased toward basic residues. Serine 735 is modified (phosphoserine). A compositionally biased stretch (polar residues) spans 737-746 (SELTQKSTKS). Positions 776-895 (TADCSGWMSK…WLSAIIKATI (120 aa)) constitute a PH domain. Threonine 919 bears the Phosphothreonine mark. A disordered region spans residues 930-980 (LRDAEEEEGRDQFGWDDTQNKRNSNYPIEQDQFETSDYLESSAFEYPGGRL). The segment covering 950–968 (KRNSNYPIEQDQFETSDYL) has biased composition (polar residues).

As to quaternary structure, interacts with BEM1.

Its subcellular location is the bud. It localises to the bud neck. Its function is as follows. Functions redundantly with BOI2 to promote the fusion of secretory vesicles with the plasma membrane at sites of polarized growth. In Saccharomyces cerevisiae (strain ATCC 204508 / S288c) (Baker's yeast), this protein is BEM1-interacting protein 1.